The chain runs to 257 residues: Snake venom serine proteinase 11 (257 aa).

The first 18 residues, 1 to 18, serve as a signal peptide directing secretion; that stretch reads MVLIRVLANLLILQLSYA. The propeptide occupies 19 to 24; it reads QKSSEL. The 224-residue stretch at 25 to 248 folds into the Peptidase S1 domain; the sequence is VVGGDECNIN…YTEWIQSIIT (224 aa). Cystine bridges form between cysteine 31–cysteine 162, cysteine 49–cysteine 65, cysteine 97–cysteine 255, cysteine 141–cysteine 209, cysteine 173–cysteine 188, and cysteine 199–cysteine 224. Catalysis depends on charge relay system residues histidine 64 and aspartate 109. Asparagine 120 is a glycosylation site (N-linked (GlcNAc...) asparagine). Serine 203 acts as the Charge relay system in catalysis.

It belongs to the peptidase S1 family. Snake venom subfamily. As to quaternary structure, monomer. As to expression, expressed by the venom gland.

Its subcellular location is the secreted. In terms of biological role, snake venom serine protease that may act in the hemostasis system of the prey. This chain is Snake venom serine proteinase 11, found in Crotalus adamanteus (Eastern diamondback rattlesnake).